A 472-amino-acid chain; its full sequence is Adenosylhomocysteinase (472 aa).

T64, D138, and E198 together coordinate substrate. Residue 199 to 201 (TTT) participates in NAD(+) binding. The substrate site is built by K228 and D232. NAD(+) contacts are provided by residues N233, 262 to 267 (GFGDVG), E285, N320, 341 to 343 (IGH), and N386.

Belongs to the adenosylhomocysteinase family. It depends on NAD(+) as a cofactor.

The protein resides in the cytoplasm. It carries out the reaction S-adenosyl-L-homocysteine + H2O = L-homocysteine + adenosine. It functions in the pathway amino-acid biosynthesis; L-homocysteine biosynthesis; L-homocysteine from S-adenosyl-L-homocysteine: step 1/1. May play a key role in the regulation of the intracellular concentration of adenosylhomocysteine. This Prochlorococcus marinus (strain MIT 9215) protein is Adenosylhomocysteinase.